Consider the following 235-residue polypeptide: MLTYDRWETVEKPSFPSDNETKGALDVLAWAYREYGDEIVYACSFGIEGIVLIDLISQVKPDAEIVFLDTGLHFQETYDTIAKVKETYPSLRIIMKQPHLTLEEQAAQFGDELWKRDPNKCCELRKVIPLREVLTGVTAWISGLRREQSPTRRHVEYVNKDDKFRSIKVCPLIHWTWKDVWNYVYKHSLPYNVLHDRGYPSIGCAPCTAPALDPNDLRSGRWAGQGKTECGLHLT.

[4Fe-4S] cluster-binding residues include Cys-121, Cys-122, Cys-204, and Cys-207. Cys-230 (nucleophile; cysteine thiosulfonate intermediate) is an active-site residue.

This sequence belongs to the PAPS reductase family. CysH subfamily. Requires [4Fe-4S] cluster as cofactor.

The protein resides in the cytoplasm. The enzyme catalyses [thioredoxin]-disulfide + sulfite + AMP + 2 H(+) = adenosine 5'-phosphosulfate + [thioredoxin]-dithiol. The protein operates within sulfur metabolism; hydrogen sulfide biosynthesis; sulfite from sulfate. Catalyzes the formation of sulfite from adenosine 5'-phosphosulfate (APS) using thioredoxin as an electron donor. The sequence is that of Adenosine 5'-phosphosulfate reductase from Geobacillus thermodenitrificans (strain NG80-2).